The sequence spans 581 residues: Arginine--tRNA ligase (581 aa).

Positions 122–132 (PNVAKPMHVGH) match the 'HIGH' region motif.

Belongs to the class-I aminoacyl-tRNA synthetase family. In terms of assembly, monomer.

It localises to the cytoplasm. It catalyses the reaction tRNA(Arg) + L-arginine + ATP = L-arginyl-tRNA(Arg) + AMP + diphosphate. The chain is Arginine--tRNA ligase from Francisella tularensis subsp. tularensis (strain FSC 198).